We begin with the raw amino-acid sequence, 671 residues long: MKSEGESGPFQGILRDIEGRRKCYKQDWIRGIKTGIRILAPTCYIFFASSLPVVAFGEQLSKHTGGALSAVETLASTSICGIIHAIFGGQPLLIVGVAEPTIIMYTYLYSFCISRPDIGRELYLAWVAWVCVWTSVLLILLSIFNAGTIITRFTRIAGELFGMLIAVLFLQEAIKGLISEFHAPEIKNQETGKSHFLLIYANGLLAVIFSLGLLITALKSRRAKSWKYGFGWLRSFIGDYGVPLMVLLWTALSYTVPSEVLPSVPRRLFCPLPWEPASLYHWTVVKDMGKVPIMYILAAFIPGVMIAGLYFFDHSVASQMAQQKEFNLKNPSAYHYDIFLLGIITLICGLLGLPPSNGVLPQAPMHTKSLAVLNRQLIRKKMVKKAKECMKMKASKSEIYGRMQSVFIEMETSPPQDNSVATDLKELKEVVMRPDEGGDTKGKFDPDVHIEANLPVRVNEQRVSNLLQSVLVGLTLLAVTVIKMIPSSVLWGYFAYMAIDSLPGNQFWERLLLLFIPPSRLFKVLEGVHASFVELVPYRVIVTFTLFQLVYFLLCYGMTWIPMAGIFFPALFFLLISIREHLLPKLFDMQHLQVLDASDYEEIVAAPIQHSSFAYRKLGSSHHLSEGEDEFYDAEILDEMTTSRGEIRIRTISFKEVHPEPEEKHVTFEPH.

At Met-1–Arg-37 the chain is on the cytoplasmic side. Residues Ile-38–Glu-58 traverse the membrane as a helical segment. Residues Gln-59 to Thr-77 lie on the Extracellular side of the membrane. The helical transmembrane segment at Ser-78 to Ala-98 threads the bilayer. Over Glu-99–Tyr-123 the chain is Cytoplasmic. The helical transmembrane segment at Leu-124 to Phe-144 threads the bilayer. The Extracellular segment spans residues Asn-145–Ala-157. Residues Gly-158–Ile-178 traverse the membrane as a helical segment. Over Ser-179–His-195 the chain is Cytoplasmic. A helical transmembrane segment spans residues Phe-196–Thr-216. Residues Ala-217 to Ser-235 are Extracellular-facing. A helical membrane pass occupies residues Phe-236–Val-256. Residues Pro-257–Val-291 lie on the Cytoplasmic side of the membrane. The chain crosses the membrane as a helical span at residues Pro-292 to Phe-312. Residues Asp-313–Ser-332 are Extracellular-facing. The helical transmembrane segment at Ala-333–Leu-353 threads the bilayer. At Pro-354–Ser-469 the chain is on the cytoplasmic side. The chain crosses the membrane as a helical span at residues Val-470–Leu-490. Topologically, residues Trp-491–Gly-557 are extracellular. Residues Met-558–Ile-578 form a helical membrane-spanning segment. At Arg-579–His-671 the chain is on the cytoplasmic side.

This sequence belongs to the anion exchanger (TC 2.A.31.3) family.

It is found in the membrane. Functionally, probable boron transporter. Boron is essential for maintaining the integrity of plants cell walls. In Arabidopsis thaliana (Mouse-ear cress), this protein is Probable boron transporter 6 (BOR6).